A 109-amino-acid chain; its full sequence is ATP-dependent Clp protease adapter protein ClpS (109 aa).

Residues 1-23 form a disordered region; the sequence is MTERKHDDTGVEEGTGLATKTRP.

Belongs to the ClpS family. Binds to the N-terminal domain of the chaperone ClpA.

Its function is as follows. Involved in the modulation of the specificity of the ClpAP-mediated ATP-dependent protein degradation. The protein is ATP-dependent Clp protease adapter protein ClpS of Maricaulis maris (strain MCS10) (Caulobacter maris).